A 400-amino-acid chain; its full sequence is Protein screw (400 aa).

The signal sequence occupies residues 1-16; that stretch reads MLNVFFLTSLFYAASA. A propeptide spanning residues 17–277 is cleaved from the precursor; it reads TTYVTTNNHI…RFKRDLEKRR (261 aa). 5 N-linked (GlcNAc...) asparagine glycosylation sites follow: asparagine 165, asparagine 189, asparagine 201, asparagine 304, and asparagine 342. Cystine bridges form between cysteine 300/cysteine 365, cysteine 329/cysteine 397, and cysteine 333/cysteine 399.

Belongs to the TGF-beta family. As to quaternary structure, heterodimers of scw/dpp are the active subunit, dpp/dpp homodimers elicit a basal response and scw/scw homodimers alone are ineffective in specifying a dorsal pattern. In terms of tissue distribution, ubiquitously expressed during early stages of embryogenesis, but the effect on development appears graded and is restricted to the dorsal side of the embryo.

The protein resides in the secreted. Functionally, part of the signal that specifies dorsal cell fates in the embryo. Acts together with dpp. The sequence is that of Protein screw (scw) from Drosophila melanogaster (Fruit fly).